A 270-amino-acid polypeptide reads, in one-letter code: MTSGAPCLLIDAGNSRIKWALVQAGGSQIASGALTHGGEHQPDWLSLPTPGGAWLSNVAGESVARRIAALLEARWPQLPLTTISACAQQCGVTNSYTAPHMLGSDRWAGLIGAHAAFPGEHLLIATFGTATTLEALRADGCFVGGLIAPGWTLMMRSLGEHTAQLPTLDASAARGLLDGSTRDAARRGPFFATDTPRSLSAGCTLAQAGLVERMWRDLQDEWQVPVRLVVSGGAVDEVASALKVPHTRHDSLVLSGLALIAAGRAAERGA.

Position 11-18 (11-18 (DAGNSRIK)) interacts with ATP. Residues Tyr96 and 103-106 (GSDR) contribute to the substrate site. Asp105 serves as the catalytic Proton acceptor. ATP is bound at residue Thr129. Residue Thr195 coordinates substrate.

Belongs to the type III pantothenate kinase family. Homodimer. The cofactor is NH4(+). K(+) is required as a cofactor.

The protein localises to the cytoplasm. The catalysed reaction is (R)-pantothenate + ATP = (R)-4'-phosphopantothenate + ADP + H(+). It participates in cofactor biosynthesis; coenzyme A biosynthesis; CoA from (R)-pantothenate: step 1/5. In terms of biological role, catalyzes the phosphorylation of pantothenate (Pan), the first step in CoA biosynthesis. The sequence is that of Type III pantothenate kinase from Paraburkholderia xenovorans (strain LB400).